The sequence spans 1681 residues: Y' element ATP-dependent helicase protein 1 copy 2 (1681 aa).

The Helicase ATP-binding domain occupies 683–860 (EIYMADTPSV…LQRIGLTGLA (178 aa)). 696–703 (APPGYGKT) contributes to the ATP binding site. The region spanning 917 to 1066 (KLLLALFEIE…EFYGLESKKG (150 aa)) is the Helicase C-terminal domain. Over residues 1140–1283 (ANASTNATTN…ATTTESTNAS (144 aa)) the composition is skewed to low complexity. The segment at 1140 to 1307 (ANASTNATTN…RFHPVTDINK (168 aa)) is disordered. Positions 1284 to 1307 (AKEDANKDGNAEDNRFHPVTDINK) are enriched in basic and acidic residues.

It belongs to the helicase family. Yeast subtelomeric Y' repeat subfamily.

Its function is as follows. Catalyzes DNA unwinding and is involved in telomerase-independent telomere maintenance. The protein is Y' element ATP-dependent helicase protein 1 copy 2 (YRF1-2) of Saccharomyces cerevisiae (strain ATCC 204508 / S288c) (Baker's yeast).